The chain runs to 98 residues: MNEEERVGSSSSSSSSLPVSYGVDCEKYDFSSSVSSLSQPFSPEGSSNKSHVLENNLSFVFSLDHNSNSSLMFPRDRPCSCLHHVFEWILQRCCGCLC.

In terms of tissue distribution, mainly expressed in flowers, to a lower extent, in roots and, at very low levels, in leaves and stems.

It is found in the cytoplasm. Functionally, acts as an opponent to RZF1 during early seedling growth in term of proline accumulation in response to dehydration and abscisic acid (ABA). Confers sensitivity to abiotic stresses such as ABA, drought and osmotic stress (e.g. mannitol treatment) by preventing proline accumulation and by reducing the expression of dehydration-inducible genes. Promotes the production of lipid peroxidation by drought stress thus leading to malondialdehyde (MDA) synthesis. Prevents pollen tube elongation. Necessary for RZF1 expression in seedlings. This Arabidopsis thaliana (Mouse-ear cress) protein is Protein PROLINE CONTENT ALTERNATIVE 22.